A 212-amino-acid chain; its full sequence is Superoxide dismutase [Fe] 1, chloroplastic (212 aa).

Residue alanine 2 is modified to N-acetylalanine. The Fe cation site is built by histidine 35, histidine 87, aspartate 169, and histidine 173.

It belongs to the iron/manganese superoxide dismutase family. Homodimer. Interacts with cpn20/cpn21. The cofactor is Fe cation.

It is found in the cell membrane. The protein resides in the plastid. It localises to the chloroplast membrane. Its subcellular location is the chloroplast stroma. The catalysed reaction is 2 superoxide + 2 H(+) = H2O2 + O2. Its activity is regulated as follows. Activated by cpn20/cpn21. Functionally, destroys superoxide anion radicals which are normally produced within the cells and which are toxic to biological systems. The sequence is that of Superoxide dismutase [Fe] 1, chloroplastic (FSD1) from Arabidopsis thaliana (Mouse-ear cress).